The primary structure comprises 122 residues: HetP-like commitment protein Alr3234 (122 aa).

Belongs to the HetP family. In terms of assembly, in bacterial two-hybrid assays interacts robustly with itself, Asl1930, Alr2902 and HetR and weakly with HetP.

In terms of biological role, delays heterocyst differentiation and commitment when nitrogen is limiting. Interplay between the 4 HetP paralogs controls the timing of commitment to heterocyst formation and its duration. Epistatic analysis show that the 3 paralogs act upstream of hetP to delay commitment (asl1930, alr3234) or inhibit development (alr2902). Asl1930 and Alr3234 must also attenuate the activity of Alr2902. Ectopic expression does not complement a hetP deletion. This chain is HetP-like commitment protein Alr3234, found in Nostoc sp. (strain PCC 7120 / SAG 25.82 / UTEX 2576).